Consider the following 323-residue polypeptide: 1D-myo-inositol 2-acetamido-2-deoxy-alpha-D-glucopyranoside deacetylase (323 aa).

Zn(2+)-binding residues include His-28, Asp-31, and His-163.

The protein belongs to the MshB deacetylase family. Zn(2+) is required as a cofactor.

It catalyses the reaction 1D-myo-inositol 2-acetamido-2-deoxy-alpha-D-glucopyranoside + H2O = 1D-myo-inositol 2-amino-2-deoxy-alpha-D-glucopyranoside + acetate. Its function is as follows. Catalyzes the deacetylation of 1D-myo-inositol 2-acetamido-2-deoxy-alpha-D-glucopyranoside (GlcNAc-Ins) in the mycothiol biosynthesis pathway. This Streptomyces scabiei (strain 87.22) protein is 1D-myo-inositol 2-acetamido-2-deoxy-alpha-D-glucopyranoside deacetylase.